The chain runs to 407 residues: Phosphopentomutase (407 aa).

Mn(2+) contacts are provided by aspartate 10, aspartate 306, histidine 311, aspartate 347, histidine 348, and histidine 359.

This sequence belongs to the phosphopentomutase family. The cofactor is Mn(2+).

The protein localises to the cytoplasm. The catalysed reaction is 2-deoxy-alpha-D-ribose 1-phosphate = 2-deoxy-D-ribose 5-phosphate. The enzyme catalyses alpha-D-ribose 1-phosphate = D-ribose 5-phosphate. Its pathway is carbohydrate degradation; 2-deoxy-D-ribose 1-phosphate degradation; D-glyceraldehyde 3-phosphate and acetaldehyde from 2-deoxy-alpha-D-ribose 1-phosphate: step 1/2. Functionally, isomerase that catalyzes the conversion of deoxy-ribose 1-phosphate (dRib-1-P) and ribose 1-phosphate (Rib-1-P) to deoxy-ribose 5-phosphate (dRib-5-P) and ribose 5-phosphate (Rib-5-P), respectively. The polypeptide is Phosphopentomutase (Sodalis glossinidius (strain morsitans)).